A 998-amino-acid polypeptide reads, in one-letter code: Bifunctional glutamine synthetase adenylyltransferase/adenylyl-removing enzyme (998 aa).

An adenylyl removase region spans residues methionine 1–leucine 487. An adenylyl transferase region spans residues glycine 492 to serine 998.

Belongs to the GlnE family. It depends on Mg(2+) as a cofactor.

The catalysed reaction is [glutamine synthetase]-O(4)-(5'-adenylyl)-L-tyrosine + phosphate = [glutamine synthetase]-L-tyrosine + ADP. It carries out the reaction [glutamine synthetase]-L-tyrosine + ATP = [glutamine synthetase]-O(4)-(5'-adenylyl)-L-tyrosine + diphosphate. Involved in the regulation of glutamine synthetase GlnA, a key enzyme in the process to assimilate ammonia. When cellular nitrogen levels are high, the C-terminal adenylyl transferase (AT) inactivates GlnA by covalent transfer of an adenylyl group from ATP to specific tyrosine residue of GlnA, thus reducing its activity. Conversely, when nitrogen levels are low, the N-terminal adenylyl removase (AR) activates GlnA by removing the adenylyl group by phosphorolysis, increasing its activity. The regulatory region of GlnE binds the signal transduction protein PII (GlnB) which indicates the nitrogen status of the cell. The chain is Bifunctional glutamine synthetase adenylyltransferase/adenylyl-removing enzyme from Mycobacterium avium (strain 104).